The primary structure comprises 463 residues: Hexose-6-phosphate:phosphate antiporter (463 aa).

Topologically, residues 1-24 (MLAFLNQVRKPTLDLPLDVRRKMW) are cytoplasmic. The chain crosses the membrane as a helical span at residues 25–45 (FKPFMQSYLVVFIGYLTMYLI). At 46–60 (RKNFNIAQNDMISTY) the chain is on the periplasmic side. The chain crosses the membrane as a helical span at residues 61-81 (GLSMTELGMIGLGFSITYGVG). The Cytoplasmic portion of the chain corresponds to 82–96 (KTLVSYYADGKNTKQ). A helical membrane pass occupies residues 97-117 (FLPFMLILSAICMLGFSASMG). The Periplasmic portion of the chain corresponds to 118–122 (AGSTS). The chain crosses the membrane as a helical span at residues 123–143 (LFLMIAFYALSGFFQSTGGSC). The Cytoplasmic segment spans residues 144–159 (SYSTITKWTPRRKRGT). The helical transmembrane segment at 160 to 180 (FLGFWNISHNLGGAGAAGVAL) threads the bilayer. Topologically, residues 181-189 (FGANYLFDG) are periplasmic. The chain crosses the membrane as a helical span at residues 190 to 210 (HVIGMFIFPSIIALIVGFIGL). Residues 211–259 (RFGSDSPESYGLGKAEELFGEEISEEDKETEENEMTKWQIFVEYVLKNK) lie on the Cytoplasmic side of the membrane. Residues 260–280 (VIWLLCFSNIFLYVVRIGIDQ) form a helical membrane-spanning segment. At 281–297 (WSTVYAFQELKLSKEVA) the chain is on the periplasmic side. Residues 298 to 318 (IQGFTLFEVGALVGTLLWGWL) traverse the membrane as a helical segment. Over 319 to 326 (SDLANGRR) the chain is Cytoplasmic. The chain crosses the membrane as a helical span at residues 327 to 347 (ALVACVALALIIATLGVYQHA). The Periplasmic segment spans residues 348–357 (SNQYVYLASL). A helical transmembrane segment spans residues 358–378 (FALGFLVFGPQLLIGVAAVGF). At 379 to 382 (VPKK) the chain is on the cytoplasmic side. Residues 383-403 (AIGAADGIKGTFAYLIGDSFA) traverse the membrane as a helical segment. Residues 404 to 425 (KLGLGMIADGTPVFGLTGWAGT) lie on the Periplasmic side of the membrane. The helical transmembrane segment at 426–446 (FAALDAAAIGCICLMAMVAVM) threads the bilayer. Over 447 to 463 (EERKIRREKKIQQVNIA) the chain is Cytoplasmic.

This sequence belongs to the major facilitator superfamily. Organophosphate:Pi antiporter (OPA) (TC 2.A.1.4) family.

It localises to the cell inner membrane. Functionally, mediates the exchange of external hexose 6-phosphate and internal inorganic phosphate. This is Hexose-6-phosphate:phosphate antiporter (uhpT) from Salmonella typhimurium (strain LT2 / SGSC1412 / ATCC 700720).